Consider the following 217-residue polypeptide: Small ribosomal subunit protein uS5 (217 aa).

The S5 DRBM domain maps to 49 to 112 (LEEKVLDVKL…AQAKKNIIRV (64 aa)).

This sequence belongs to the universal ribosomal protein uS5 family. Part of the 30S ribosomal subunit. Contacts protein S4.

In terms of biological role, with S4 and S12 plays an important role in translational accuracy. The polypeptide is Small ribosomal subunit protein uS5 (Methanocaldococcus jannaschii (strain ATCC 43067 / DSM 2661 / JAL-1 / JCM 10045 / NBRC 100440) (Methanococcus jannaschii)).